Reading from the N-terminus, the 166-residue chain is Endoribonuclease YbeY (166 aa).

Residues His132, His136, and His142 each coordinate Zn(2+).

Belongs to the endoribonuclease YbeY family. Zn(2+) is required as a cofactor.

Its subcellular location is the cytoplasm. Single strand-specific metallo-endoribonuclease involved in late-stage 70S ribosome quality control and in maturation of the 3' terminus of the 16S rRNA. In Clostridium botulinum (strain 657 / Type Ba4), this protein is Endoribonuclease YbeY.